A 440-amino-acid polypeptide reads, in one-letter code: Tryptophan synthase beta chain 2 (440 aa).

Lysine 110 is subject to N6-(pyridoxal phosphate)lysine.

The protein belongs to the TrpB family. Tetramer of two alpha and two beta chains. Requires pyridoxal 5'-phosphate as cofactor.

It catalyses the reaction (1S,2R)-1-C-(indol-3-yl)glycerol 3-phosphate + L-serine = D-glyceraldehyde 3-phosphate + L-tryptophan + H2O. It functions in the pathway amino-acid biosynthesis; L-tryptophan biosynthesis; L-tryptophan from chorismate: step 5/5. The beta subunit is responsible for the synthesis of L-tryptophan from indole and L-serine. This Pyrococcus abyssi (strain GE5 / Orsay) protein is Tryptophan synthase beta chain 2 (trpB2).